Here is a 348-residue protein sequence, read N- to C-terminus: Dihydroorotase (348 aa).

Residues histidine 17 and histidine 19 each coordinate Zn(2+). Substrate contacts are provided by residues histidine 19–arginine 21 and asparagine 45. Residues lysine 103, histidine 140, and histidine 178 each coordinate Zn(2+). Lysine 103 bears the N6-carboxylysine mark. Histidine 140 contributes to the substrate binding site. A substrate-binding site is contributed by leucine 223. Residue aspartate 251 coordinates Zn(2+). Aspartate 251 is a catalytic residue. Substrate-binding residues include histidine 255 and alanine 267.

It belongs to the metallo-dependent hydrolases superfamily. DHOase family. Class II DHOase subfamily. Homodimer. The cofactor is Zn(2+).

It catalyses the reaction (S)-dihydroorotate + H2O = N-carbamoyl-L-aspartate + H(+). The protein operates within pyrimidine metabolism; UMP biosynthesis via de novo pathway; (S)-dihydroorotate from bicarbonate: step 3/3. Functionally, catalyzes the reversible cyclization of carbamoyl aspartate to dihydroorotate. The protein is Dihydroorotase of Yersinia pseudotuberculosis serotype O:1b (strain IP 31758).